We begin with the raw amino-acid sequence, 620 residues long: LysM domain receptor-like kinase 3 (620 aa).

An N-terminal signal peptide occupies residues 1–23 (MNLKNGLLLFILFLDCVFFKVES). Topologically, residues 24-231 (KCVKGCDVAL…YSRTGIAKGS (208 aa)) are extracellular. Cystine bridges form between Cys25/Cys92, Cys29/Cys154, and Cys90/Cys152. Asn46 carries an N-linked (GlcNAc...) asparagine glycan. A LysM 1; degenerate domain is found at 46-72 (NISNFMQSKIVLTNSFDVIMSYNRDVV). 2 LysM domains span residues 102 to 148 (FEYT…KINV) and 167 to 210 (VTYP…VFIP). Residues 108 to 114 (EGDDYDL) and 136 to 142 (DPNHIPV) contribute to the chitin site. Asn147 and Asn199 each carry an N-linked (GlcNAc...) asparagine glycan. Residues 232-252 (AVGIAMAGIFGLLLFVIYIYA) traverse the membrane as a helical segment. Residues 253 to 620 (KYFQKKEEEK…QSLINLLSTR (368 aa)) lie on the Cytoplasmic side of the membrane. Over residues 265–278 (LPQTSRAFSTQDAS) the composition is skewed to polar residues. The disordered stretch occupies residues 265–292 (LPQTSRAFSTQDASGSAEYETSGSSGHA). Residues Ser269 and Ser273 each carry the phosphoserine modification. A Protein kinase domain is found at 322–595 (FSLDNKIGQG…RSIVVALMTL (274 aa)). ATP-binding positions include 328 to 336 (IGQGGFGAV) and Lys349. Asp441 functions as the Proton acceptor in the catalytic mechanism.

Belongs to the protein kinase superfamily. Ser/Thr protein kinase family. In terms of assembly, forms homodimers and homooligomers. Forms heteromeric complexes with NFP at the cell periphery in nodules. Interacts with PUB1. Post-translationally, autophosphorylated. In terms of tissue distribution, expressed in the epidermal and root hair cells of the developing root hair zone during nonsymbiotic growth. Accumulates in roots and nodules during symbiotic growth with rhizobia. Localized at the cell periphery in a narrow zone of about two cell layers (e.g. L1/L2 zone) at the nodule apex upon infection by rhizobia, from the meristem to the infection zone (at protein level).

It is found in the cell membrane. It localises to the vacuole lumen. It carries out the reaction L-seryl-[protein] + ATP = O-phospho-L-seryl-[protein] + ADP + H(+). The catalysed reaction is L-threonyl-[protein] + ATP = O-phospho-L-threonyl-[protein] + ADP + H(+). Its function is as follows. Putative receptor for S.meliloti Nod factor signals essential for the establishment of the nitrogen-fixing, root nodule symbiosis with S.meliloti. Involved in the control of root hair curling after S.meliloti infection, probably by modulating the reorganization of the microtubular cytoskeleton in epidermal and cortical cells. Regulates a subset of Nod factor-induced genes. This Medicago truncatula (Barrel medic) protein is LysM domain receptor-like kinase 3.